Here is a 286-residue protein sequence, read N- to C-terminus: tRNA (guanine-N(7)-)-methyltransferase (286 aa).

Residues serine 7 and serine 59 each carry the phosphoserine modification. S-adenosyl-L-methionine contacts are provided by residues glycine 103, 126 to 127, 161 to 162, and cysteine 181; these read EI and NA. Residue aspartate 184 is part of the active site. 259 to 261 provides a ligand contact to S-adenosyl-L-methionine; that stretch reads TEE.

It belongs to the class I-like SAM-binding methyltransferase superfamily. TrmB family. In terms of assembly, forms a complex with TRM82.

It is found in the nucleus. It carries out the reaction guanosine(46) in tRNA + S-adenosyl-L-methionine = N(7)-methylguanosine(46) in tRNA + S-adenosyl-L-homocysteine. It functions in the pathway tRNA modification; N(7)-methylguanine-tRNA biosynthesis. Functionally, methyltransferase that catalyzes the formation of N(7)-methylguanine at position 46 (m7G46) in tRNA, a modification required to maintain stability of tRNAs; its absence resulting in tRNA decay. Both the D-stem and T-stem structures of tRNAs are required for efficient methyltransferase activity. In Saccharomyces cerevisiae (strain RM11-1a) (Baker's yeast), this protein is tRNA (guanine-N(7)-)-methyltransferase.